The chain runs to 482 residues: tRNA sulfurtransferase (482 aa).

Residues 61 to 165 (EAIRDALTRI…QDRLLLIKSR (105 aa)) form the THUMP domain. ATP contacts are provided by residues 183-184 (LI), lysine 265, glycine 287, and glutamine 296. Residues cysteine 344 and cysteine 456 are joined by a disulfide bond. Residues 404-482 (FVPTDVLLDI…GFSNVKVYRP (79 aa)) enclose the Rhodanese domain. The active-site Cysteine persulfide intermediate is cysteine 456.

The protein belongs to the ThiI family.

It is found in the cytoplasm. The enzyme catalyses [ThiI sulfur-carrier protein]-S-sulfanyl-L-cysteine + a uridine in tRNA + 2 reduced [2Fe-2S]-[ferredoxin] + ATP + H(+) = [ThiI sulfur-carrier protein]-L-cysteine + a 4-thiouridine in tRNA + 2 oxidized [2Fe-2S]-[ferredoxin] + AMP + diphosphate. The catalysed reaction is [ThiS sulfur-carrier protein]-C-terminal Gly-Gly-AMP + S-sulfanyl-L-cysteinyl-[cysteine desulfurase] + AH2 = [ThiS sulfur-carrier protein]-C-terminal-Gly-aminoethanethioate + L-cysteinyl-[cysteine desulfurase] + A + AMP + 2 H(+). It participates in cofactor biosynthesis; thiamine diphosphate biosynthesis. In terms of biological role, catalyzes the ATP-dependent transfer of a sulfur to tRNA to produce 4-thiouridine in position 8 of tRNAs, which functions as a near-UV photosensor. Also catalyzes the transfer of sulfur to the sulfur carrier protein ThiS, forming ThiS-thiocarboxylate. This is a step in the synthesis of thiazole, in the thiamine biosynthesis pathway. The sulfur is donated as persulfide by IscS. The chain is tRNA sulfurtransferase from Pectobacterium atrosepticum (strain SCRI 1043 / ATCC BAA-672) (Erwinia carotovora subsp. atroseptica).